The sequence spans 238 residues: Ribosomal RNA small subunit methyltransferase G (238 aa).

S-adenosyl-L-methionine contacts are provided by residues G106, L111, 157-158 (IE), and R170.

It belongs to the methyltransferase superfamily. RNA methyltransferase RsmG family.

It localises to the cytoplasm. It carries out the reaction guanosine(527) in 16S rRNA + S-adenosyl-L-methionine = N(7)-methylguanosine(527) in 16S rRNA + S-adenosyl-L-homocysteine. Specifically methylates the N7 position of guanine in position 527 of 16S rRNA. The chain is Ribosomal RNA small subunit methyltransferase G from Psychrobacter arcticus (strain DSM 17307 / VKM B-2377 / 273-4).